The chain runs to 573 residues: NADH-ubiquinone oxidoreductase chain 5 (573 aa).

Transmembrane regions (helical) follow at residues 4–24, 44–64, 85–105, 106–126, 147–167, 170–190, 212–234, 239–259, 268–288, 294–314, 337–357, 377–396, 422–442, 452–472, 487–507, and 552–572; these read ISFINLISISLTCFLLSLYYL, IVMTFLFDWMSLLFMSFVLMI, FIMLVLMFVLSMMLLIISPNL, VSILLGWDGLGLVSYCLVIYF, VALLLAIAWMLNYGSWNYIFY, VMQNEFSMLMIGSLVMLAAMT, SALVHSSTLVTAGVYLLIRFNIV, WLGQLLLLLSGLTMFMAGLGA, IIALSTLSQLGLMMSILSMGF, FHLLTHALFKALLFMCAGAII, SACFNVSNLALCGMPFLAGFY, FLYFFSTGLTVSYSFRLVYY, LGLLFMSIIGGSMLNWLIFPF, LKMLTLFVCIVGGLFGYLISI, LTLFLGSMWFMPYISTYGMIF, and LKIYLMLFVFWIMILFSFLLF.

It belongs to the complex I subunit 5 family.

The protein localises to the mitochondrion inner membrane. It catalyses the reaction a ubiquinone + NADH + 5 H(+)(in) = a ubiquinol + NAD(+) + 4 H(+)(out). Functionally, core subunit of the mitochondrial membrane respiratory chain NADH dehydrogenase (Complex I) that is believed to belong to the minimal assembly required for catalysis. Complex I functions in the transfer of electrons from NADH to the respiratory chain. The immediate electron acceptor for the enzyme is believed to be ubiquinone. The polypeptide is NADH-ubiquinone oxidoreductase chain 5 (mt:ND5) (Drosophila yakuba (Fruit fly)).